The sequence spans 35 residues: Peptide ToHyp2 (35 aa).

Over residues 1–29 (LPKPPLLPPPVPGLAPGLPPLPVPDPVPH) the composition is skewed to pro residues. A disordered region spans residues 1–35 (LPKPPLLPPPVPGLAPGLPPLPVPDPVPHPPKKPP). A hydroxyproline mark is found at proline 5, proline 9, proline 10, proline 12, proline 16, proline 20, proline 31, and proline 35.

Post-translationally, O-glycosylated; contains pentose side chains at some or all of the hydroxyproline residues. Glycosylation is required for full antifungal activity.

Antimicrobial peptide. Inhibits elongation of hyphae in B.sorokiniana (IC(50)=3.8 uM) but has no effect on this process or on germination of conidia in a panel of other phytopathogenic fungi. At concentrations above 10 uM, has antibacterial activity. The sequence is that of Peptide ToHyp2 from Taraxacum officinale (Common dandelion).